We begin with the raw amino-acid sequence, 62 residues long: Large ribosomal subunit protein uL29 (62 aa).

This sequence belongs to the universal ribosomal protein uL29 family.

In Oleidesulfovibrio alaskensis (strain ATCC BAA-1058 / DSM 17464 / G20) (Desulfovibrio alaskensis), this protein is Large ribosomal subunit protein uL29.